The following is a 343-amino-acid chain: Cell division protein ZipA (343 aa).

Topologically, residues 1–4 are periplasmic; sequence MDLN. The helical transmembrane segment at 5–25 threads the bilayer; the sequence is TILIILGILALIGLVAHGIWS. At 26–343 the chain is on the cytoplasmic side; that stretch reads NRREKSQYFD…MAEAAYLARV (318 aa). The interval 39 to 98 is disordered; it reads AFHRNPQSTGRPSAQASQPMTPNFAQPAKETEQIRQTYQEPQVRQMSSSPEQQTRPTAQA. Composition is skewed to polar residues over residues 43–62 and 72–95; these read NPQS…TPNF and IRQT…TRPT.

Belongs to the ZipA family. Interacts with FtsZ via their C-terminal domains.

The protein localises to the cell inner membrane. Essential cell division protein that stabilizes the FtsZ protofilaments by cross-linking them and that serves as a cytoplasmic membrane anchor for the Z ring. Also required for the recruitment to the septal ring of downstream cell division proteins. The chain is Cell division protein ZipA from Actinobacillus succinogenes (strain ATCC 55618 / DSM 22257 / CCUG 43843 / 130Z).